We begin with the raw amino-acid sequence, 374 residues long: N5-carboxyaminoimidazole ribonucleotide synthase (374 aa).

Residues Arg108, Lys148, 153 to 159 (GYDGKGQ), 183 to 186 (EKYL), Glu191, His214, and 266 to 267 (NE) contribute to the ATP site. In terms of domain architecture, ATP-grasp spans 112-296 (KETLKSAGTK…QFDTHILAVT (185 aa)).

It belongs to the PurK/PurT family. In terms of assembly, homodimer.

The enzyme catalyses 5-amino-1-(5-phospho-beta-D-ribosyl)imidazole + hydrogencarbonate + ATP = 5-carboxyamino-1-(5-phospho-D-ribosyl)imidazole + ADP + phosphate + 2 H(+). Its pathway is purine metabolism; IMP biosynthesis via de novo pathway; 5-amino-1-(5-phospho-D-ribosyl)imidazole-4-carboxylate from 5-amino-1-(5-phospho-D-ribosyl)imidazole (N5-CAIR route): step 1/2. In terms of biological role, catalyzes the ATP-dependent conversion of 5-aminoimidazole ribonucleotide (AIR) and HCO(3)(-) to N5-carboxyaminoimidazole ribonucleotide (N5-CAIR). In Staphylococcus aureus (strain Mu50 / ATCC 700699), this protein is N5-carboxyaminoimidazole ribonucleotide synthase.